A 226-amino-acid polypeptide reads, in one-letter code: 2-C-methyl-D-erythritol 4-phosphate cytidylyltransferase (226 aa).

It belongs to the IspD/TarI cytidylyltransferase family. IspD subfamily.

The catalysed reaction is 2-C-methyl-D-erythritol 4-phosphate + CTP + H(+) = 4-CDP-2-C-methyl-D-erythritol + diphosphate. It participates in isoprenoid biosynthesis; isopentenyl diphosphate biosynthesis via DXP pathway; isopentenyl diphosphate from 1-deoxy-D-xylulose 5-phosphate: step 2/6. Functionally, catalyzes the formation of 4-diphosphocytidyl-2-C-methyl-D-erythritol from CTP and 2-C-methyl-D-erythritol 4-phosphate (MEP). The protein is 2-C-methyl-D-erythritol 4-phosphate cytidylyltransferase of Bacillus cytotoxicus (strain DSM 22905 / CIP 110041 / 391-98 / NVH 391-98).